The sequence spans 307 residues: Alpha N-terminal protein methyltransferase 1 (307 aa).

Residues 38–51 are compositionally biased toward low complexity; the sequence is EPAPAPAAGSNGVA. The disordered stretch occupies residues 38-60; it reads EPAPAPAAGSNGVAGEEEAGGGG. S-adenosyl-L-methionine-binding positions include Gly-123, Arg-128, 145-147, 179-180, and Gln-195; these read EPV and LQ.

This sequence belongs to the methyltransferase superfamily. NTM1 family.

It catalyses the reaction N-terminal L-alanyl-L-prolyl-L-lysyl-[protein] + 3 S-adenosyl-L-methionine = N-terminal N,N,N-trimethyl-L-alanyl-L-prolyl-L-lysyl-[protein] + 3 S-adenosyl-L-homocysteine + 3 H(+). The catalysed reaction is N-terminal L-seryl-L-prolyl-L-lysyl-[protein] + 3 S-adenosyl-L-methionine = N-terminal N,N,N-trimethyl-L-seryl-L-prolyl-L-lysyl-[protein] + 3 S-adenosyl-L-homocysteine + 3 H(+). It carries out the reaction N-terminal L-prolyl-L-prolyl-L-lysyl-[protein] + 2 S-adenosyl-L-methionine = N-terminal N,N-dimethyl-L-prolyl-L-prolyl-L-lysyl-[protein] + 2 S-adenosyl-L-homocysteine + 2 H(+). In terms of biological role, alpha-N-methyltransferase that methylates the N-terminus of target proteins containing the N-terminal motif [Ala/Pro/Ser]-Pro-Lys when the initiator Met is cleaved. Specifically catalyzes mono-, di- or tri-methylation of exposed alpha-amino group of Ala or Ser residue in the [Ala/Ser]-Pro-Lys motif and mono- or di-methylation of Pro in the Pro-Pro-Lys motif. The chain is Alpha N-terminal protein methyltransferase 1 from Oryza sativa subsp. japonica (Rice).